Reading from the N-terminus, the 248-residue chain is tRNA (guanine-N(1)-)-methyltransferase (248 aa).

S-adenosyl-L-methionine contacts are provided by residues Gly113 and Ile133–Leu138.

Belongs to the RNA methyltransferase TrmD family. Homodimer.

The protein resides in the cytoplasm. It carries out the reaction guanosine(37) in tRNA + S-adenosyl-L-methionine = N(1)-methylguanosine(37) in tRNA + S-adenosyl-L-homocysteine + H(+). Specifically methylates guanosine-37 in various tRNAs. The protein is tRNA (guanine-N(1)-)-methyltransferase of Dehalococcoides mccartyi (strain ATCC BAA-2266 / KCTC 15142 / 195) (Dehalococcoides ethenogenes (strain 195)).